The sequence spans 434 residues: 4-hydroxy-3-methylbut-2-en-1-yl diphosphate synthase (flavodoxin) (434 aa).

A compositionally biased stretch (polar residues) spans 1 to 15; it reads MQSEAQSPRSSQICS. The disordered stretch occupies residues 1-24; that stretch reads MQSEAQSPRSSQICSTEPVFGGHQ. [4Fe-4S] cluster contacts are provided by C322, C325, C368, and E375.

It belongs to the IspG family. The cofactor is [4Fe-4S] cluster.

It carries out the reaction (2E)-4-hydroxy-3-methylbut-2-enyl diphosphate + oxidized [flavodoxin] + H2O + 2 H(+) = 2-C-methyl-D-erythritol 2,4-cyclic diphosphate + reduced [flavodoxin]. It participates in isoprenoid biosynthesis; isopentenyl diphosphate biosynthesis via DXP pathway; isopentenyl diphosphate from 1-deoxy-D-xylulose 5-phosphate: step 5/6. In terms of biological role, converts 2C-methyl-D-erythritol 2,4-cyclodiphosphate (ME-2,4cPP) into 1-hydroxy-2-methyl-2-(E)-butenyl 4-diphosphate. This Burkholderia ambifaria (strain MC40-6) protein is 4-hydroxy-3-methylbut-2-en-1-yl diphosphate synthase (flavodoxin).